The primary structure comprises 315 residues: Protein TIFY 4B (315 aa).

The disordered stretch occupies residues 113-145 (CHRRDSPRSAEFSGSSGQFVADKDSHKTVSVSP). The region spanning 151–186 (TNAVVGQMTIFYSGKVNVYDGVPPEKARSIMHFAAN) is the Tify domain. The Jas signature appears at 233 to 260 (QANRKVSLQRYLEKRKDRRFSKTKKAPG). Positions 235 to 242 (NRKVSLQR) match the Nuclear localization signal motif. Residues 248–257 (KDRRFSKTKK) show a composition bias toward basic residues. The tract at residues 248–315 (KDRRFSKTKK…LNSDLNSEDN (68 aa)) is disordered. The segment covering 293-315 (PENQTKSPNISVDLNSDLNSEDN) has biased composition (polar residues).

Belongs to the TIFY/JAZ family. Interacts with AFPH2/NINJA.

The protein localises to the nucleus. Its function is as follows. Regulates the arrest of dispersed meristematic cells during lamina development. The protein is Protein TIFY 4B (TIFY4B) of Arabidopsis thaliana (Mouse-ear cress).